A 189-amino-acid polypeptide reads, in one-letter code: Thioredoxin-like protein CITRX, chloroplastic (189 aa).

Residues 1-56 (MAMAAAASLLPASAAPTLPGRAFRPPRNSTPTASLSCDGGSRCRGVGLGVILGGCR) constitute a chloroplast transit peptide. The region spanning 72–189 (GSGKYIAPDY…MIRNIIDNEL (118 aa)) is the Thioredoxin domain. Catalysis depends on nucleophile residues C112 and C115. C112 and C115 are joined by a disulfide.

The protein belongs to the thioredoxin family. Plant CITRX-type subfamily.

It localises to the plastid. Its subcellular location is the chloroplast. Functionally, probable thiol-disulfide oxidoreductase that may play a role in proper chloroplast development. The protein is Thioredoxin-like protein CITRX, chloroplastic of Oryza sativa subsp. japonica (Rice).